The primary structure comprises 303 residues: tRNA dimethylallyltransferase (303 aa).

Position 12-19 (12-19 (GPTGVGKT)) interacts with ATP. 14 to 19 (TGVGKT) serves as a coordination point for substrate. The segment at 37 to 40 (DSAQ) is interaction with substrate tRNA.

Belongs to the IPP transferase family. As to quaternary structure, monomer. It depends on Mg(2+) as a cofactor.

It carries out the reaction adenosine(37) in tRNA + dimethylallyl diphosphate = N(6)-dimethylallyladenosine(37) in tRNA + diphosphate. In terms of biological role, catalyzes the transfer of a dimethylallyl group onto the adenine at position 37 in tRNAs that read codons beginning with uridine, leading to the formation of N6-(dimethylallyl)adenosine (i(6)A). In Fusobacterium nucleatum subsp. nucleatum (strain ATCC 25586 / DSM 15643 / BCRC 10681 / CIP 101130 / JCM 8532 / KCTC 2640 / LMG 13131 / VPI 4355), this protein is tRNA dimethylallyltransferase.